The chain runs to 266 residues: Undecaprenyl-diphosphatase (266 aa).

8 consecutive transmembrane segments (helical) span residues 1-21 (MDIF…FLPI), 39-59 (QGLT…VIYF), 87-107 (WWII…KDFI), 114-134 (IEVI…ADKL), 144-164 (VGWK…IPGT), 184-204 (AARF…ILVV), 218-238 (ALVL…HYFL), and 246-266 (MTPF…VIFA).

The protein belongs to the UppP family.

The protein resides in the cell inner membrane. It catalyses the reaction di-trans,octa-cis-undecaprenyl diphosphate + H2O = di-trans,octa-cis-undecaprenyl phosphate + phosphate + H(+). Catalyzes the dephosphorylation of undecaprenyl diphosphate (UPP). Confers resistance to bacitracin. This is Undecaprenyl-diphosphatase from Shewanella loihica (strain ATCC BAA-1088 / PV-4).